The chain runs to 68 residues: Large ribosomal subunit protein bL35 (68 aa).

This sequence belongs to the bacterial ribosomal protein bL35 family.

The protein is Large ribosomal subunit protein bL35 of Pelagibacter ubique (strain HTCC1062).